We begin with the raw amino-acid sequence, 332 residues long: Ribosomal RNA small subunit methyltransferase C (332 aa).

Belongs to the methyltransferase superfamily. RsmC family. As to quaternary structure, monomer.

The protein localises to the cytoplasm. The enzyme catalyses guanosine(1207) in 16S rRNA + S-adenosyl-L-methionine = N(2)-methylguanosine(1207) in 16S rRNA + S-adenosyl-L-homocysteine + H(+). In terms of biological role, specifically methylates the guanine in position 1207 of 16S rRNA in the 30S particle. This chain is Ribosomal RNA small subunit methyltransferase C, found in Pseudomonas fluorescens (strain ATCC BAA-477 / NRRL B-23932 / Pf-5).